The primary structure comprises 496 residues: Transcription termination/antitermination protein NusA (496 aa).

The S1 motif domain occupies 135 to 200; it reads GQIITGIVKK…RGAQLFISRS (66 aa). The region spanning 302-370 is the KH domain; sequence CHTMDIAVDI…KNLNINENII (69 aa). 2 repeat units span residues 364–414 and 440–490. The segment at 364–490 is 2 X 51 AA approximate repeats; sequence NINENIIKIL…LLIMTARNIC (127 aa).

The protein belongs to the NusA family. As to quaternary structure, monomer. Binds directly to the core enzyme of the DNA-dependent RNA polymerase and to nascent RNA.

The protein localises to the cytoplasm. Participates in both transcription termination and antitermination. This chain is Transcription termination/antitermination protein NusA, found in Buchnera aphidicola subsp. Acyrthosiphon pisum (strain APS) (Acyrthosiphon pisum symbiotic bacterium).